A 318-amino-acid chain; its full sequence is MFTINLLLLITPALIAMAFLTLMERKILGYMQLRKGPNTVGPYGVLQPIADAMKLFTKEPLLPSVSTTTLYMAAPTLALTIALLLWTPLPMPYSLINFNLGLLFVLATSSLAVYSILWSGWASNSNYALIGALRAVAQTISYGVTLAIILLSTLLMSGSFNLHSLITTQEQSWLLLPSWPLTMMWFISTLAETNRAPFDLTEGESELISGFNIEYAAGSFALFFMAEYMNIIMMNALTTTIFTATPYNMLTTELYTMNFMTKTLLLTILFLWIRTAYPRFRYDQLMYLLWKKFLPLTLALCMWYISMPMLLSGIPPQT.

A run of 8 helical transmembrane segments spans residues 2–22 (FTINLLLLITPALIAMAFLTL), 70–90 (LYMAAPTLALTIALLLWTPLP), 98–118 (FNLGLLFVLATSSLAVYSILW), 140–160 (ISYGVTLAIILLSTLLMSGSF), 173–193 (WLLLPSWPLTMMWFISTLAET), 217–237 (AGSFALFFMAEYMNIIMMNAL), 253–273 (ELYTMNFMTKTLLLTILFLWI), and 294–314 (LPLTLALCMWYISMPMLLSGI).

It belongs to the complex I subunit 1 family.

It is found in the mitochondrion inner membrane. It catalyses the reaction a ubiquinone + NADH + 5 H(+)(in) = a ubiquinol + NAD(+) + 4 H(+)(out). In terms of biological role, core subunit of the mitochondrial membrane respiratory chain NADH dehydrogenase (Complex I) that is believed to belong to the minimal assembly required for catalysis. Complex I functions in the transfer of electrons from NADH to the respiratory chain. The immediate electron acceptor for the enzyme is believed to be ubiquinone. This chain is NADH-ubiquinone oxidoreductase chain 1 (MT-ND1), found in Sapajus apella (Brown-capped capuchin).